A 443-amino-acid chain; its full sequence is Glucose-6-phosphate isomerase (443 aa).

The active-site Proton donor is Glu-285. Residues His-306 and Lys-420 contribute to the active site.

This sequence belongs to the GPI family.

It localises to the cytoplasm. The catalysed reaction is alpha-D-glucose 6-phosphate = beta-D-fructose 6-phosphate. Its pathway is carbohydrate biosynthesis; gluconeogenesis. The protein operates within carbohydrate degradation; glycolysis; D-glyceraldehyde 3-phosphate and glycerone phosphate from D-glucose: step 2/4. In terms of biological role, catalyzes the reversible isomerization of glucose-6-phosphate to fructose-6-phosphate. This chain is Glucose-6-phosphate isomerase, found in Staphylococcus aureus (strain Mu3 / ATCC 700698).